The primary structure comprises 62 residues: Large ribosomal subunit protein bL28 (62 aa).

Belongs to the bacterial ribosomal protein bL28 family.

The protein is Large ribosomal subunit protein bL28 of Syntrophomonas wolfei subsp. wolfei (strain DSM 2245B / Goettingen).